The following is a 428-amino-acid chain: Serine--tRNA ligase (428 aa).

235–237 (TAE) contributes to the L-serine binding site. 266–268 (RSE) contributes to the ATP binding site. Glutamate 289 provides a ligand contact to L-serine. 353–356 (EISS) is an ATP binding site. Serine 389 serves as a coordination point for L-serine.

The protein belongs to the class-II aminoacyl-tRNA synthetase family. Type-1 seryl-tRNA synthetase subfamily. In terms of assembly, homodimer. The tRNA molecule binds across the dimer.

It localises to the cytoplasm. The enzyme catalyses tRNA(Ser) + L-serine + ATP = L-seryl-tRNA(Ser) + AMP + diphosphate + H(+). It carries out the reaction tRNA(Sec) + L-serine + ATP = L-seryl-tRNA(Sec) + AMP + diphosphate + H(+). Its pathway is aminoacyl-tRNA biosynthesis; selenocysteinyl-tRNA(Sec) biosynthesis; L-seryl-tRNA(Sec) from L-serine and tRNA(Sec): step 1/1. Functionally, catalyzes the attachment of serine to tRNA(Ser). Is also able to aminoacylate tRNA(Sec) with serine, to form the misacylated tRNA L-seryl-tRNA(Sec), which will be further converted into selenocysteinyl-tRNA(Sec). This Shewanella loihica (strain ATCC BAA-1088 / PV-4) protein is Serine--tRNA ligase.